A 228-amino-acid polypeptide reads, in one-letter code: 2-C-methyl-D-erythritol 4-phosphate cytidylyltransferase (228 aa).

Belongs to the IspD/TarI cytidylyltransferase family. IspD subfamily.

The catalysed reaction is 2-C-methyl-D-erythritol 4-phosphate + CTP + H(+) = 4-CDP-2-C-methyl-D-erythritol + diphosphate. Its pathway is isoprenoid biosynthesis; isopentenyl diphosphate biosynthesis via DXP pathway; isopentenyl diphosphate from 1-deoxy-D-xylulose 5-phosphate: step 2/6. Functionally, catalyzes the formation of 4-diphosphocytidyl-2-C-methyl-D-erythritol from CTP and 2-C-methyl-D-erythritol 4-phosphate (MEP). In Geobacillus kaustophilus (strain HTA426), this protein is 2-C-methyl-D-erythritol 4-phosphate cytidylyltransferase.